Consider the following 140-residue polypeptide: Putative pre-16S rRNA nuclease (140 aa).

Belongs to the YqgF nuclease family.

It localises to the cytoplasm. Its function is as follows. Could be a nuclease involved in processing of the 5'-end of pre-16S rRNA. The chain is Putative pre-16S rRNA nuclease from Aeromonas hydrophila subsp. hydrophila (strain ATCC 7966 / DSM 30187 / BCRC 13018 / CCUG 14551 / JCM 1027 / KCTC 2358 / NCIMB 9240 / NCTC 8049).